The primary structure comprises 1012 residues: Antigenic heat-stable 120 kDa protein (1012 aa).

Disordered stretches follow at residues 1–73 (DTSE…TSDP) and 348–396 (GQSK…PQSQ). Basic and acidic residues predominate over residues 12–27 (EYTEEQKQTLEQEQKE). Residues 47 to 61 (SASSAQSTPSMSALS) are compositionally biased toward low complexity. Composition is skewed to polar residues over residues 62–73 (GNISPDSQTSDP), 348–373 (GQSK…QYKQ), and 380–396 (PTNQ…PQSQ).

It localises to the cytoplasm. The chain is Antigenic heat-stable 120 kDa protein (sca4) from Rickettsia slovaca.